Reading from the N-terminus, the 153-residue chain is Arachidonate 5-lipoxygenase-activating protein (153 aa).

Residues 1-8 are Lumenal-facing; it reads MDQETVGN. A helical membrane pass occupies residues 9 to 30; that stretch reads VVLLAIVTLISVIQNGFFAHKV. The Cytoplasmic portion of the chain corresponds to 31 to 52; sequence EHESKTQNGRSFQRTGTLAFER. A helical membrane pass occupies residues 53-77; that stretch reads VYTANQNCVDAYPTFLVMLWSAGLL. The Lumenal portion of the chain corresponds to 78 to 80; that stretch reads CSQ. A helical membrane pass occupies residues 81-102; sequence VPAAFAGLMYLFVRQKYFVGYL. Topologically, residues 103 to 107 are cytoplasmic; the sequence is GERRQ. An intramembrane segment occupies 108-115; sequence STPGYIFG. The chain crosses the membrane as a helical span at residues 116–128; it reads KRIILFLFLMSLA. Residues 129-153 lie on the Lumenal side of the membrane; sequence GIFNYYLILFFGSDFENYIKTITTT.

The protein belongs to the MAPEG family. Homotrimer. Interacts with LTC4S and ALOX5.

The protein resides in the nucleus membrane. It localises to the endoplasmic reticulum membrane. Its function is as follows. Required for leukotriene biosynthesis by ALOX5 (5-lipoxygenase). Anchors ALOX5 to the membrane. Binds arachidonic acid, and could play an essential role in the transfer of arachidonic acid to ALOX5. Binds to MK-886, a compound that blocks the biosynthesis of leukotrienes. This is Arachidonate 5-lipoxygenase-activating protein (ALOX5AP) from Equus caballus (Horse).